The sequence spans 751 residues: Translation initiation factor IF-2, chloroplastic (751 aa).

The tract at residues 86 to 156 is disordered; it reads KKEKSKFRKD…KSKKQTSAKN (71 aa). Residues 93-106 are compositionally biased toward basic and acidic residues; the sequence is RKDEDYDSLKREDN. The span at 129–143 shows a compositional bias: low complexity; the sequence is VSNTNTLNKKNVVKS. In terms of domain architecture, tr-type G spans 250 to 423; the sequence is KRPPVIAIMG…ILVSEIEDLK (174 aa). Residues 259-266 are G1; it reads GHVDHGKT. 259–266 contacts GTP; that stretch reads GHVDHGKT. Residues 284 to 288 form a G2 region; the sequence is GITQK. Residues 309 to 312 form a G3 region; it reads DTPG. Residues 309–313 and 363–366 contribute to the GTP site; these read DTPGH and NKID. The tract at residues 363 to 366 is G4; that stretch reads NKID. Residues 399–401 form a G5 region; it reads SAM.

Belongs to the TRAFAC class translation factor GTPase superfamily. Classic translation factor GTPase family. IF-2 subfamily.

The protein localises to the plastid. It is found in the chloroplast. Its function is as follows. One of the essential components for the initiation of protein synthesis. Protects formylmethionyl-tRNA from spontaneous hydrolysis and promotes its binding to the 30S ribosomal subunits. Also involved in the hydrolysis of GTP during the formation of the 70S ribosomal complex. This chain is Translation initiation factor IF-2, chloroplastic (infB), found in Rhodomonas salina (Cryptomonas salina).